A 392-amino-acid polypeptide reads, in one-letter code: Queuine tRNA-ribosyltransferase (392 aa).

The active-site Proton acceptor is the aspartate 93. Substrate is bound by residues 93-97 (DSGGY), aspartate 147, glutamine 189, and glycine 216. Positions 247 to 253 (GVGAPED) are RNA binding. The active-site Nucleophile is the aspartate 266. The segment at 271–275 (TRVAR) is RNA binding; important for wobble base 34 recognition. Residues cysteine 304, cysteine 306, cysteine 309, and histidine 335 each contribute to the Zn(2+) site.

The protein belongs to the queuine tRNA-ribosyltransferase family. In terms of assembly, homodimer. Within each dimer, one monomer is responsible for RNA recognition and catalysis, while the other monomer binds to the replacement base PreQ1. Zn(2+) serves as cofactor.

It catalyses the reaction 7-aminomethyl-7-carbaguanine + guanosine(34) in tRNA = 7-aminomethyl-7-carbaguanosine(34) in tRNA + guanine. It functions in the pathway tRNA modification; tRNA-queuosine biosynthesis. Its function is as follows. Catalyzes the base-exchange of a guanine (G) residue with the queuine precursor 7-aminomethyl-7-deazaguanine (PreQ1) at position 34 (anticodon wobble position) in tRNAs with GU(N) anticodons (tRNA-Asp, -Asn, -His and -Tyr). Catalysis occurs through a double-displacement mechanism. The nucleophile active site attacks the C1' of nucleotide 34 to detach the guanine base from the RNA, forming a covalent enzyme-RNA intermediate. The proton acceptor active site deprotonates the incoming PreQ1, allowing a nucleophilic attack on the C1' of the ribose to form the product. After dissociation, two additional enzymatic reactions on the tRNA convert PreQ1 to queuine (Q), resulting in the hypermodified nucleoside queuosine (7-(((4,5-cis-dihydroxy-2-cyclopenten-1-yl)amino)methyl)-7-deazaguanosine). The sequence is that of Queuine tRNA-ribosyltransferase from Dehalococcoides mccartyi (strain ATCC BAA-2100 / JCM 16839 / KCTC 5957 / BAV1).